Consider the following 139-residue polypeptide: D-ribose pyranase (139 aa).

Residue histidine 20 is the Proton donor of the active site. Substrate-binding positions include aspartate 28, histidine 106, and 128-130 (YAN).

The protein belongs to the RbsD / FucU family. RbsD subfamily. As to quaternary structure, homodecamer.

It is found in the cytoplasm. It carries out the reaction beta-D-ribopyranose = beta-D-ribofuranose. The protein operates within carbohydrate metabolism; D-ribose degradation; D-ribose 5-phosphate from beta-D-ribopyranose: step 1/2. Functionally, catalyzes the interconversion of beta-pyran and beta-furan forms of D-ribose. The protein is D-ribose pyranase of Aliivibrio salmonicida (strain LFI1238) (Vibrio salmonicida (strain LFI1238)).